Consider the following 176-residue polypeptide: Centromere protein R (176 aa).

Residue Lys8 forms a Glycyl lysine isopeptide (Lys-Gly) (interchain with G-Cter in SUMO2) linkage. Ser17 carries the post-translational modification Phosphoserine. The interval 20–50 (PSKIMRKKSITAFSPTTGTYQLSPFSSPRTP) is DD1. Lys22 participates in a covalent cross-link: Glycyl lysine isopeptide (Lys-Gly) (interchain with G-Cter in SUMO2). Ser28 carries the phosphoserine modification. Over residues 34–48 (PTTGTYQLSPFSSPR) the composition is skewed to polar residues. Positions 34–80 (PTTGTYQLSPFSSPRTPKEQEHRDGPSNGTRKWSVLSSPARQDSTVK) are disordered. Basic and acidic residues predominate over residues 49–58 (TPKEQEHRDG). Positions 60-80 (SNGTRKWSVLSSPARQDSTVK) are enriched in polar residues. The short motif at 63–66 (TRKW) is the Nuclear localization signal element. Phosphoserine is present on Ser71. Residues 82–112 (SDGFMMLLSKIERSSEKTMEIMKNLSSLQAL) adopt a coiled-coil conformation. The short motif at 118–122 (LEDLL) is the LXXLL motif element. The short motif at 171–175 (LKAIL) is the LXXIL motif element.

In terms of assembly, homodimer; mediated by the coiled coil domain. Interacts with CCNA2 and MTA1. Interacts with NFKB1 NF-kappa-B subunit. Component of the CENPA-CAD complex, composed of CENPI, CENPK, CENPL, CENPO, CENPP, CENPQ, CENPR and CENPS. The CENPA-CAD complex interacts with the CENPA-NAC complex, at least composed of CENPA, CENPC, CENPH, CENPM, CENPN, CENPT and CENPU. Interacts with TASOR.

The protein resides in the nucleus. It localises to the chromosome. Its subcellular location is the centromere. It is found in the kinetochore. Its function is as follows. Transcription coregulator that can have both coactivator and corepressor functions. Involved in the coactivation of nuclear receptors for retinoid X (RXRs) and thyroid hormone (TRs) in a ligand-dependent fashion. In contrast, it does not coactivate nuclear receptors for retinoic acid, vitamin D, progesterone receptor, nor glucocorticoid. Acts as a coactivator for estrogen receptor alpha. Acts as a transcriptional corepressor via its interaction with the NFKB1 NF-kappa-B subunit, possibly by interfering with the transactivation domain of NFKB1. Induces apoptosis in breast cancer cells, but not in other cancer cells, via a caspase-2 mediated pathway that involves mitochondrial membrane permeabilization but does not require other caspases. May also act as an inhibitor of cyclin A-associated kinase. Also acts a component of the CENPA-CAD (nucleosome distal) complex, a complex recruited to centromeres which is involved in assembly of kinetochore proteins, mitotic progression and chromosome segregation. May be involved in incorporation of newly synthesized CENPA into centromeres via its interaction with the CENPA-NAC complex. This chain is Centromere protein R (Itgb3bp), found in Rattus norvegicus (Rat).